The sequence spans 947 residues: Plasma membrane ATPase 2 (947 aa).

The interval 1–103 (MSSTEAKQYK…TDGVHAGQRV (103 aa)) is disordered. Topologically, residues 1–144 (MSSTEAKQYK…AEENESLIVK (144 aa)) are cytoplasmic. Basic and acidic residues predominate over residues 7–22 (KQYKEKPSKEYLHASD). Over residues 26–61 (PANNSAASSSSSSSTSTSASSSAAAVPRKAAAASAA) the composition is skewed to low complexity. The segment covering 62–74 (DDSDSDEDIDQLI) has biased composition (acidic residues). Residues 145–165 (FLMFFVGPIQFVMEAAAILAA) traverse the membrane as a helical segment. At 166 to 169 (GLSD) the chain is on the extracellular side. The chain crosses the membrane as a helical span at residues 170-189 (WVDVGVICALLLLNASVGFI). The Cytoplasmic segment spans residues 190–320 (QEFQAGSIVD…VEGHFTEVLN (131 aa)). A helical transmembrane segment spans residues 321-342 (GIGIILLVLVIATLLLVWTACF). Residues 343 to 353 (YRTVGIVSILR) are Extracellular-facing. The chain crosses the membrane as a helical span at residues 354-376 (YTLGITIIGVPVGLPAVVTTTMA). The Cytoplasmic segment spans residues 377–748 (VGAAYLAKKQ…IAILNNSLDI (372 aa)). The active-site 4-aspartylphosphate intermediate is Asp-407. The Mg(2+) site is built by Asp-663 and Asp-667. A helical membrane pass occupies residues 749–767 (NLIVFIAIFADVATLTIAY). Topologically, residues 768-783 (DNAPYAPEPVKWNLPR) are extracellular. A helical membrane pass occupies residues 784 to 803 (LWGMSIILGIVLAIGSWITL). Residues 804–853 (TTMFLPNGGIIQNFGAMNGVMFLQISLTENWLIFVTRAAGPFWSSIPSWQ) lie on the Cytoplasmic side of the membrane. Residues 854-874 (LAGAVFAVDIIATMFTLFGWW) form a helical membrane-spanning segment. At 875–886 (SENWTDIVSVVR) the chain is on the extracellular side. Residues 887 to 903 (VWIWSIGIFCVLGGFYY) traverse the membrane as a helical segment. The Cytoplasmic segment spans residues 904 to 947 (IMSTSQAFDRLMNGKSLKEKKSTRSVEDFMAAMQRVSTQHEKSS).

This sequence belongs to the cation transport ATPase (P-type) (TC 3.A.3) family. Type IIIA subfamily.

The protein resides in the cell membrane. The enzyme catalyses ATP + H2O + H(+)(in) = ADP + phosphate + 2 H(+)(out). The plasma membrane ATPase of plants and fungi is a hydrogen ion pump. The proton gradient it generates drives the active transport of nutrients by H(+)-symport. The resulting external acidification and/or internal alkinization may mediate growth responses. This is Plasma membrane ATPase 2 (PMA2) from Saccharomyces cerevisiae (strain ATCC 204508 / S288c) (Baker's yeast).